Consider the following 204-residue polypeptide: Large ribosomal subunit protein bL25 (204 aa).

The segment at Met1–Ser20 is disordered.

This sequence belongs to the bacterial ribosomal protein bL25 family. CTC subfamily. As to quaternary structure, part of the 50S ribosomal subunit; part of the 5S rRNA/L5/L18/L25 subcomplex. Contacts the 5S rRNA. Binds to the 5S rRNA independently of L5 and L18.

This is one of the proteins that binds to the 5S RNA in the ribosome where it forms part of the central protuberance. The polypeptide is Large ribosomal subunit protein bL25 (Rhizobium meliloti (strain 1021) (Ensifer meliloti)).